Consider the following 472-residue polypeptide: Chromosomal replication initiator protein DnaA (472 aa).

Positions methionine 1 to glutamate 73 are domain I, interacts with DnaA modulators. Residues glutamate 73–serine 128 are domain II. Residues valine 89–glycine 127 are disordered. The span at alanine 97–serine 112 shows a compositional bias: basic and acidic residues. Low complexity predominate over residues histidine 113–alanine 124. A domain III, AAA+ region region spans residues proline 129–serine 351. ATP is bound by residues glycine 176, glycine 178, lysine 179, and threonine 180. Residues lysine 352–glutamate 472 form a domain IV, binds dsDNA region.

This sequence belongs to the DnaA family. In terms of assembly, oligomerizes as a right-handed, spiral filament on DNA at oriC.

The protein resides in the cytoplasm. Plays an essential role in the initiation and regulation of chromosomal replication. ATP-DnaA binds to the origin of replication (oriC) to initiate formation of the DNA replication initiation complex once per cell cycle. Binds the DnaA box (a 9 base pair repeat at the origin) and separates the double-stranded (ds)DNA. Forms a right-handed helical filament on oriC DNA; dsDNA binds to the exterior of the filament while single-stranded (ss)DNA is stabiized in the filament's interior. The ATP-DnaA-oriC complex binds and stabilizes one strand of the AT-rich DNA unwinding element (DUE), permitting loading of DNA polymerase. After initiation quickly degrades to an ADP-DnaA complex that is not apt for DNA replication. Binds acidic phospholipids. This chain is Chromosomal replication initiator protein DnaA, found in Rhodopseudomonas palustris (strain BisB5).